We begin with the raw amino-acid sequence, 495 residues long: MDDQKESLRKIITTLALKNEEIQNFICSLKQSLENLEANSNRVQEDLESEFSSLHSVLDDLKEGMVTRIKQERASRTYELQSQLGACTKALESSEELLEFANQTLCSSENDSFTQAAKDIKDSVTMAPAFRLSLKAKASDSMNHMMVDFTHERNLLQSITFLPVPATPEIHVADCQVFDNTVTVVWTLPEPDSKIDHYILEHRKTNHEGPPRAREDYPWMVVEGIKETEYTLTGVRFDTRYMTFRVKACNKAVAGEFSEPVTLETHAFVFKLDASSSHQNLKVEDLSVEWDSSGGKVAVQDIRKEKNRTNSPMHSPARTAMMSPKRAPSARVGRDRFTAESYTVLGDTMIDAGQHYWEVRFDKESKAFAAGVALRSLGRFDQLGKSNASWCIHLNNWLQQSLTAKHNNKARTLDCSIPDRIGIYCNYEEGTLSFYNSRNKTLLHTFRTKFQQPVIPAFMVWNGSFSVQTGLQVPSIVLSGQKRNSNTSSSNASLT.

The stretch at Q4–E99 forms a coiled coil. The COS domain occupies L105–L162. A Fibronectin type-III domain is found at V164–F268. In terms of domain architecture, B30.2/SPRY spans L281–I476. The segment at K306–V332 is disordered. Residue S490 is modified to Phosphoserine.

In terms of assembly, oligomerization is required for binding to microtubules.

It is found in the cytoplasm. Its subcellular location is the cytoskeleton. The protein localises to the microtubule organizing center. It localises to the centrosome. The protein resides in the nucleus. It is found in the cleavage furrow. In terms of biological role, may be involved in microtubule organization and stabilization. This Danio rerio (Zebrafish) protein is Fibronectin type III and SPRY domain-containing protein 1 (fsd1).